The following is a 1339-amino-acid chain: Receptor tyrosine-protein kinase erbB-3 (1339 aa).

Positions 1-19 (MSAIGTLQVLGFLLSLARG) are cleaved as a signal peptide. At 20-641 (SEMGNSQAVC…QAEVLMSKPH (622 aa)) the chain is on the extracellular side. N126 carries N-linked (GlcNAc...) asparagine glycosylation. 11 disulfide bridges follow: C186-C194, C190-C202, C210-C218, C214-C226, C227-C235, C231-C243, C246-C255, C259-C286, C290-C301, C305-C320, and C323-C327. N250 carries N-linked (GlcNAc...) asparagine glycosylation. N-linked (GlcNAc...) asparagine glycosylation is found at N353, N408, N414, N437, and N469. Cystine bridges form between C500/C509, C504/C517, C520/C529, C533/C549, C552/C565, C556/C573, C576/C585, C589/C610, C613/C621, and C617/C629. N-linked (GlcNAc...) asparagine glycosylation is present at N522. Residue N566 is glycosylated (N-linked (GlcNAc...) asparagine). N-linked (GlcNAc...) asparagine glycosylation is present at N616. Residues 642-662 (LVIAVTVGLTVIFLILGGSFL) form a helical membrane-spanning segment. Over 663 to 1339 (YWRGRRIQNK…LFPKANAQRI (677 aa)) the chain is Cytoplasmic. S684 carries the post-translational modification Phosphoserine. The Protein kinase domain occupies 707-964 (LRKLKVLGSG…TFKELANEFT (258 aa)). ATP-binding positions include 713 to 721 (LGSGVFGTV), K740, 786 to 788 (QYL), and 832 to 837 (DLALRN). The active-site Proton acceptor is D832. S980 bears the Phosphoserine mark. Disordered stretches follow at residues 1028–1052 (LSLP…SGYM), 1077–1156 (RPIS…GNGY), and 1181–1212 (SVLG…PRPG). The segment covering 1185-1195 (TEEEDEDEEYE) has biased composition (acidic residues).

The protein belongs to the protein kinase superfamily. Tyr protein kinase family. EGF receptor subfamily. Monomer and homodimer. Heterodimer with each of the other ERBB receptors (Potential). Interacts with CSPG5, PA2G4, GRB7 and MUC1. Interacts with MYOC. Found in a ternary complex with NRG1 and ITGAV:ITGB3 or ITGA6:ITGB4. Autophosphorylated. Ligand-binding increases phosphorylation on tyrosine residues and promotes its association with the p85 subunit of phosphatidylinositol 3-kinase. As to expression, in the muscle, expression localizes to the synaptic sites of muscle fibers.

The protein localises to the membrane. It catalyses the reaction L-tyrosyl-[protein] + ATP = O-phospho-L-tyrosyl-[protein] + ADP + H(+). Its function is as follows. Tyrosine-protein kinase that plays an essential role as cell surface receptor for neuregulins. Binds to neuregulin-1 (NRG1) and is activated by it; ligand-binding increases phosphorylation on tyrosine residues and promotes its association with the p85 subunit of phosphatidylinositol 3-kinase. May also be activated by CSPG5. Involved in the regulation of myeloid cell differentiation. The sequence is that of Receptor tyrosine-protein kinase erbB-3 (Erbb3) from Mus musculus (Mouse).